The chain runs to 291 residues: Undecaprenyl-diphosphatase (291 aa).

8 helical membrane-spanning segments follow: residues 1–21 (MIIIEFIKGLILGIVEGLTEF), 48–68 (SAFTFKVVIQLGSVFAAAWVF), 100–120 (LHVLVGMIPAGILGVLFDDFI), 124–144 (LFSVPTVMIGLFLGAIYMIIA), 160–180 (INYVQAFVIGISQAVAMWPGF), 201–221 (SDFTFIMAVPIMLAASALSLV), 230–250 (AHIPFYLIGFLAAFIVGLIAI), and 270–290 (IVLVIIIAILYFGFGIGQGIS).

It belongs to the UppP family.

It localises to the cell membrane. It catalyses the reaction di-trans,octa-cis-undecaprenyl diphosphate + H2O = di-trans,octa-cis-undecaprenyl phosphate + phosphate + H(+). In terms of biological role, catalyzes the dephosphorylation of undecaprenyl diphosphate (UPP). Confers resistance to bacitracin. In Staphylococcus haemolyticus (strain JCSC1435), this protein is Undecaprenyl-diphosphatase.